The chain runs to 455 residues: ADP-dependent glucose/glucosamine kinase (455 aa).

Residues P2–L455 form the ADPK domain. D-glucose is bound by residues D34, E88, G112 to Q113, and H176. Residue E195 participates in ADP binding. E266 provides a ligand contact to Mg(2+). N292 is an ADP binding site. E295 lines the Mg(2+) pocket. ADP contacts are provided by residues H342–T343, V429, and G439. D440 contacts D-glucose. D440 contributes to the Mg(2+) binding site. The Proton acceptor role is filled by D440.

The protein belongs to the ADP-dependent glucokinase family. In terms of assembly, homodimer. Mg(2+) serves as cofactor.

It is found in the cytoplasm. The catalysed reaction is D-glucose + ADP = D-glucose 6-phosphate + AMP + H(+). It catalyses the reaction D-glucosamine + ADP = D-glucosamine 6-phosphate + AMP + H(+). It functions in the pathway carbohydrate degradation; glycolysis. Functionally, catalyzes the ADP-dependent phosphorylation of D-glucose to D-glucose 6-phosphate and glucosamine to glucosamine 6-phosphate. Can also use CDP as the phosphoryl group donor and D-1,5-anhydroglucitol as the phosphoryl group acceptor. The protein is ADP-dependent glucose/glucosamine kinase of Pyrococcus furiosus (strain ATCC 43587 / DSM 3638 / JCM 8422 / Vc1).